The following is a 497-amino-acid chain: Glycerol kinase (497 aa).

Thr-13 is a binding site for ADP. ATP is bound by residues Thr-13, Thr-14, and Ser-15. Residue Thr-13 participates in sn-glycerol 3-phosphate binding. Position 17 (Arg-17) interacts with ADP. Positions 83, 84, and 135 each coordinate sn-glycerol 3-phosphate. 3 residues coordinate glycerol: Arg-83, Glu-84, and Tyr-135. His-231 is modified (phosphohistidine; by HPr). A sn-glycerol 3-phosphate-binding site is contributed by Asp-245. Glycerol-binding residues include Asp-245 and Gln-246. Positions 267 and 310 each coordinate ADP. The ATP site is built by Thr-267, Gly-310, Gln-314, and Gly-411. Residues Gly-411 and Asn-415 each contribute to the ADP site.

Belongs to the FGGY kinase family. Homotetramer and homodimer (in equilibrium). Post-translationally, the phosphoenolpyruvate-dependent sugar phosphotransferase system (PTS), including enzyme I, and histidine-containing protein (HPr) are required for the phosphorylation, which leads to the activation of the enzyme.

The enzyme catalyses glycerol + ATP = sn-glycerol 3-phosphate + ADP + H(+). It participates in polyol metabolism; glycerol degradation via glycerol kinase pathway; sn-glycerol 3-phosphate from glycerol: step 1/1. With respect to regulation, activated by phosphorylation and inhibited by fructose 1,6-bisphosphate (FBP). Key enzyme in the regulation of glycerol uptake and metabolism. Catalyzes the phosphorylation of glycerol to yield sn-glycerol 3-phosphate. In Halalkalibacterium halodurans (strain ATCC BAA-125 / DSM 18197 / FERM 7344 / JCM 9153 / C-125) (Bacillus halodurans), this protein is Glycerol kinase.